A 119-amino-acid polypeptide reads, in one-letter code: Protein yippee-like 3 (119 aa).

The 98-residue stretch at 19–116 (RRYSCAHCRA…IELNHMIKDN (98 aa)) folds into the Yippee domain. Zn(2+) is bound by residues C23, C26, C79, and C82.

The protein belongs to the yippee family. In terms of processing, probably ubiquitinated leading to its degradation by the proteasome.

The protein localises to the nucleus. It localises to the nucleolus. Functionally, involved in proliferation and apoptosis in myeloid precursor cells. The sequence is that of Protein yippee-like 3 (YPEL3) from Bos taurus (Bovine).